Here is a 966-residue protein sequence, read N- to C-terminus: uncharacterized protein (966 aa).

The N-terminal stretch at 1–24 is a signal peptide; sequence MQGNLLKVLGVLAIVATLVCFIFA. The next 6 membrane-spanning stretches (helical) occupy residues 601-621, 711-731, 743-763, 785-805, 822-842, and 855-875; these read IKAI…LGFA, LGLS…IVII, AFMA…FLLF, VVMM…LDFV, FIGT…INWF, and GVNM…YGYV. The disordered stretch occupies residues 918-966; the sequence is TRQGITGRAEARLKQRNKTLDQAEKNRKNTQKEGGEKTNEEPPKPETPK. Basic and acidic residues predominate over residues 926–966; that stretch reads AEARLKQRNKTLDQAEKNRKNTQKEGGEKTNEEPPKPETPK.

This sequence belongs to the TrbL/VirB6 family.

The protein resides in the cell membrane. This is an uncharacterized protein from Rickettsia conorii (strain ATCC VR-613 / Malish 7).